The sequence spans 636 residues: Receptor-like kinase LIP1 (636 aa).

The segment at 18–57 (NAPCTTNETNDDNVEHDEFRPPVVATTKRTEEREPAEQQP) is disordered. The Protein kinase domain occupies 74–352 (FRQECLLGEG…SDVMVALSFL (279 aa)). ATP contacts are provided by residues 80–88 (LGEGGFGRV) and Lys-103. Asp-201 functions as the Proton acceptor in the catalytic mechanism. Ser-205 and Ser-236 each carry phosphoserine. Phosphothreonine is present on Thr-242. Phosphotyrosine is present on Tyr-250. The interval 389-636 (FCISRKDVGN…EEEHISSDHD (248 aa)) is disordered. The stretch at 403–434 (SSDSEDEEEEKEQKAEKEEESTSKKRQEQEET) forms a coiled coil. Over residues 413 to 431 (KEQKAEKEEESTSKKRQEQ) the composition is skewed to basic and acidic residues. Residues 432-455 (EETATDSDDESDSNSEKDQEEEQS) show a composition bias toward acidic residues. The segment covering 480-489 (TNATAQSLKI) has biased composition (polar residues). Basic and acidic residues-rich tracts occupy residues 522–531 (DSGRDHDDSS) and 554–566 (HETR…DDSP). The span at 567–576 (RNTSMRINSL) shows a compositional bias: polar residues. 2 stretches are compositionally biased toward basic and acidic residues: residues 588-603 (NHQT…KSED) and 619-636 (SLHR…SDHD).

It belongs to the protein kinase superfamily. Ser/Thr protein kinase family. In terms of assembly, interacts with PRK6. Post-translationally, palmitoylated. As to expression, expressed in mature pollen and in germinating pollen tubes.

The protein resides in the cell membrane. It localises to the cytoplasm. Its function is as follows. Involved in pollen tube guidance into micropyle. Participates in perception of the ovule-secreted peptide signal LURE1. This chain is Receptor-like kinase LIP1, found in Arabidopsis thaliana (Mouse-ear cress).